A 602-amino-acid chain; its full sequence is Sulfite reductase [NADPH] flavoprotein alpha-component (602 aa).

Positions 68–206 (ITIISASQTG…NYIQWSEELL (139 aa)) constitute a Flavodoxin-like domain. Residues 74–79 (SQTGNA), 121–124 (STQG), and 157–166 (LGDVSYNLFC) contribute to the FMN site. The FAD-binding FR-type domain occupies 237–451 (YKPAVATVLL…VEEKSNFRLP (215 aa)). FAD is bound by residues T325, K359, 389-392 (RLYS), 407-409 (TVG), and 422-425 (GGSS). NADP(+) contacts are provided by residues 522-523 (SR), 528-532 (KIYVQ), and D564. Y602 is an FAD binding site.

Belongs to the NADPH-dependent sulphite reductase flavoprotein subunit CysJ family. The protein in the N-terminal section; belongs to the flavodoxin family. This sequence in the C-terminal section; belongs to the flavoprotein pyridine nucleotide cytochrome reductase family. In terms of assembly, alpha(8)-beta(8). The alpha component is a flavoprotein, the beta component is a hemoprotein. It depends on FAD as a cofactor. The cofactor is FMN.

The enzyme catalyses hydrogen sulfide + 3 NADP(+) + 3 H2O = sulfite + 3 NADPH + 4 H(+). It functions in the pathway sulfur metabolism; hydrogen sulfide biosynthesis; hydrogen sulfide from sulfite (NADPH route): step 1/1. Its function is as follows. Component of the sulfite reductase complex that catalyzes the 6-electron reduction of sulfite to sulfide. This is one of several activities required for the biosynthesis of L-cysteine from sulfate. The flavoprotein component catalyzes the electron flow from NADPH -&gt; FAD -&gt; FMN to the hemoprotein component. This chain is Sulfite reductase [NADPH] flavoprotein alpha-component, found in Buchnera aphidicola subsp. Schizaphis graminum (strain Sg).